Consider the following 169-residue polypeptide: Putative phosphoesterase SE_0715 (169 aa).

Residue His-34 is the Proton donor of the active site. 2 consecutive short sequence motifs (HXTX) follow at residues 34–37 (HITI) and 115–118 (HFTI). Catalysis depends on His-115, which acts as the Proton acceptor.

The protein belongs to the 2H phosphoesterase superfamily. YjcG family.

In Staphylococcus epidermidis (strain ATCC 12228 / FDA PCI 1200), this protein is Putative phosphoesterase SE_0715.